The sequence spans 128 residues: Small ribosomal subunit protein uS9 (128 aa).

Residues 106–128 form a disordered region; that stretch reads SRKVERKKPGRPKARKKFQFSKR. Residues 109–128 are compositionally biased toward basic residues; that stretch reads VERKKPGRPKARKKFQFSKR.

The protein belongs to the universal ribosomal protein uS9 family.

The polypeptide is Small ribosomal subunit protein uS9 (Azobacteroides pseudotrichonymphae genomovar. CFP2).